The following is a 241-amino-acid chain: Venom nerve growth factor (241 aa).

Positions 1–18 (MSMLCYTLIIAFLIGIWA) are cleaved as a signal peptide. Positions 19 to 122 (APKSEDNVPL…SLNRNIRAKR (104 aa)) are excised as a propeptide. Cystine bridges form between C136–C201, C179–C229, and C189–C231. N-linked (GlcNAc...) asparagine glycosylation is present at N145.

This sequence belongs to the NGF-beta family. As to quaternary structure, homodimer; non-covalently linked. Expressed by the venom gland.

The protein localises to the secreted. Functionally, nerve growth factor is important for the development and maintenance of the sympathetic and sensory nervous systems. It stimulates division and differentiation of sympathetic and embryonic sensory neurons as well as basal forebrain cholinergic neurons in the brain. Its relevance in the snake venom is not clear. However, it has been shown to inhibit metalloproteinase-dependent proteolysis of platelet glycoprotein Ib alpha, suggesting a metalloproteinase inhibition to prevent metalloprotease autodigestion and/or protection against prey proteases. Binds a lipid between the two protein chains in the homodimer. The lipid-bound form promotes histamine relase from mouse mast cells, contrary to the lipid-free form. In Crotalus durissus terrificus (South American rattlesnake), this protein is Venom nerve growth factor.